The following is a 306-amino-acid chain: Ubiquitin carboxyl-terminal hydrolase RPN11 (306 aa).

The residue at position 1 (Met1) is an N-acetylmethionine. A disordered region spans residues 1–20 (MERLQRLMMNSKVGSADTGR). The region spanning 27-162 (VYISSIALLK…IDAFRLIDTG (136 aa)) is the MPN domain. Residues His109, His111, and Asp122 each coordinate Zn(2+). Residues 109–122 (HSHPGFGCWLSSVD) carry the JAMM motif motif.

Belongs to the peptidase M67A family. As to quaternary structure, component of the lid subcomplex of the 19S proteasome regulatory particle complex (also named PA700 complex). The 26S proteasome consists of a 20S proteasome core and two 19S regulatory subunits. Interacts directly with RPN8 and STS1. In terms of processing, N-acetylated by NAT3.

The enzyme catalyses Thiol-dependent hydrolysis of ester, thioester, amide, peptide and isopeptide bonds formed by the C-terminal Gly of ubiquitin (a 76-residue protein attached to proteins as an intracellular targeting signal).. Component of the lid subcomplex of the 26S proteasome, a multiprotein complex involved in the ATP-dependent degradation of ubiquitinated proteins. RPN11 is the only catalytically active member of the lid and serves as the essential deubiquitinase of the proteasome. The protein is Ubiquitin carboxyl-terminal hydrolase RPN11 (RPN11) of Saccharomyces cerevisiae (strain ATCC 204508 / S288c) (Baker's yeast).